Here is a 322-residue protein sequence, read N- to C-terminus: tRNA-dihydrouridine(16) synthase (322 aa).

Residues 8–10 (PME) and Gln-69 contribute to the FMN site. Cys-99 functions as the Proton donor in the catalytic mechanism. Residues Lys-140, 200 to 202 (NGD), and 224 to 225 (GR) each bind FMN.

It belongs to the Dus family. DusC subfamily. FMN is required as a cofactor.

The enzyme catalyses 5,6-dihydrouridine(16) in tRNA + NADP(+) = uridine(16) in tRNA + NADPH + H(+). The catalysed reaction is 5,6-dihydrouridine(16) in tRNA + NAD(+) = uridine(16) in tRNA + NADH + H(+). Its function is as follows. Catalyzes the synthesis of 5,6-dihydrouridine (D), a modified base found in the D-loop of most tRNAs, via the reduction of the C5-C6 double bond in target uridines. Specifically modifies U16 in tRNAs. The protein is tRNA-dihydrouridine(16) synthase of Cupriavidus necator (strain ATCC 17699 / DSM 428 / KCTC 22496 / NCIMB 10442 / H16 / Stanier 337) (Ralstonia eutropha).